A 337-amino-acid chain; its full sequence is Ketol-acid reductoisomerase (NADP(+)) (337 aa).

In terms of domain architecture, KARI N-terminal Rossmann spans 3–183; it reads VEVFYDDDAD…GGTRAGVIKT (181 aa). NADP(+) is bound by residues 26–29, S52, S54, and 84–87; these read YGSQ and DTAQ. H109 is an active-site residue. Residue G135 coordinates NADP(+). The KARI C-terminal knotted domain maps to 184-329; the sequence is TFTEETETDL…GRLRAMMSWV (146 aa). D192, E196, E228, and E232 together coordinate Mg(2+). Substrate is bound at residue S253.

The protein belongs to the ketol-acid reductoisomerase family. Mg(2+) serves as cofactor.

The enzyme catalyses (2R)-2,3-dihydroxy-3-methylbutanoate + NADP(+) = (2S)-2-acetolactate + NADPH + H(+). It carries out the reaction (2R,3R)-2,3-dihydroxy-3-methylpentanoate + NADP(+) = (S)-2-ethyl-2-hydroxy-3-oxobutanoate + NADPH + H(+). Its pathway is amino-acid biosynthesis; L-isoleucine biosynthesis; L-isoleucine from 2-oxobutanoate: step 2/4. The protein operates within amino-acid biosynthesis; L-valine biosynthesis; L-valine from pyruvate: step 2/4. Involved in the biosynthesis of branched-chain amino acids (BCAA). Catalyzes an alkyl-migration followed by a ketol-acid reduction of (S)-2-acetolactate (S2AL) to yield (R)-2,3-dihydroxy-isovalerate. In the isomerase reaction, S2AL is rearranged via a Mg-dependent methyl migration to produce 3-hydroxy-3-methyl-2-ketobutyrate (HMKB). In the reductase reaction, this 2-ketoacid undergoes a metal-dependent reduction by NADPH to yield (R)-2,3-dihydroxy-isovalerate. The protein is Ketol-acid reductoisomerase (NADP(+)) of Salinispora tropica (strain ATCC BAA-916 / DSM 44818 / JCM 13857 / NBRC 105044 / CNB-440).